Here is a 1167-residue protein sequence, read N- to C-terminus: Topoisomerase 1-associated factor 1 (1167 aa).

Disordered regions lie at residues 332–353, 563–594, 889–969, 981–1093, and 1105–1167; these read SKRW…NNDF, SRRR…DYAE, KYSH…LENT, YVHA…DAID, and FDDD…SDSE. Residues 572–582 show a composition bias toward basic and acidic residues; the sequence is REEQLVNKGSD. Acidic residues-rich tracts occupy residues 583–593 and 949–958; these read EEQESEDEDYA and EEEPVDEETL. 2 stretches are compositionally biased toward basic and acidic residues: residues 959–969 and 996–1013; these read EERRQARLENT and EFFR…ERIK. Acidic residues predominate over residues 1062–1074; sequence ELEEDDILMDDME. Residues 1078–1088 show a composition bias toward polar residues; that stretch reads RASSGEYSSND. The span at 1110–1127 shows a compositional bias: basic and acidic residues; the sequence is AFGRDRDKDETSVDRDGA.

Belongs to the timeless family.

The protein resides in the nucleus. Involved in chromosome segregation during meiosis and DNA damage repair. In Emericella nidulans (strain FGSC A4 / ATCC 38163 / CBS 112.46 / NRRL 194 / M139) (Aspergillus nidulans), this protein is Topoisomerase 1-associated factor 1 (tof1).